A 319-amino-acid chain; its full sequence is Olfactory receptor 56B4 (319 aa).

Topologically, residues 1–31 (MDTSTSVTYDSSLQISQFILMGLPGIHEWQH) are extracellular. A helical membrane pass occupies residues 32 to 52 (WLSLPLTLLYLLALGANLLII). The Cytoplasmic segment spans residues 53-60 (ITIQHETV). The helical transmembrane segment at 61-81 (LHEPMYHLLGILAVVDIGLAT) threads the bilayer. Over 82-105 (TIMPKILAIFWFDAKAISLPMCFA) the chain is Extracellular. Residues C103 and C195 are joined by a disulfide bond. A helical transmembrane segment spans residues 106 to 126 (QIYAIHCFFCIESGIFLCMAV). Over 127 to 145 (DRYIAICRPLQYPSIVTKA) the chain is Cytoplasmic. The helical transmembrane segment at 146–166 (FVFKATGFIMLRNGLLTIPVP) threads the bilayer. Residues 167–202 (ILAAQRHYCSRNEIEHCLCSNLGVISLACDDITVNK) lie on the Extracellular side of the membrane. A helical membrane pass occupies residues 203–223 (FYQLMLAWVLVGSDMALVFSS). Topologically, residues 224–243 (YAVILHSVLRLNSAEAMSKA) are cytoplasmic. Residues 244-263 (LSTCSSHLILILFHTGIIVL) form a helical membrane-spanning segment. Topologically, residues 264–277 (SVTHLAEKKIPLIP) are extracellular. Residues 278–298 (VFLNVLHNVIPPALNPLACAL) traverse the membrane as a helical segment. Residues 299–319 (RMHKLRLGFQRLLGLGQDVSK) are Cytoplasmic-facing.

The protein belongs to the G-protein coupled receptor 1 family.

It is found in the cell membrane. In terms of biological role, odorant receptor. The protein is Olfactory receptor 56B4 (OR56B4) of Homo sapiens (Human).